Reading from the N-terminus, the 208-residue chain is ER membrane protein complex subunit 8/9 homolog (208 aa).

Positions 11 to 146 (YEISQNAYIK…ERSPVMQLCV (136 aa)) constitute an MPN domain.

The protein belongs to the EMC8/EMC9 family.

This chain is ER membrane protein complex subunit 8/9 homolog (EMB2731), found in Arabidopsis thaliana (Mouse-ear cress).